We begin with the raw amino-acid sequence, 96 residues long: MKIRPLHDRVIVKRLEAERKTASGIVIPDSAGEKPDQGEVLAVGNGKILDDGKVRPMAVKVGDKVLFGKYAGQTVKVEGDELLVMREEDIMGVVEA.

It belongs to the GroES chaperonin family. In terms of assembly, heptamer of 7 subunits arranged in a ring. Interacts with the chaperonin GroEL.

Its subcellular location is the cytoplasm. Functionally, together with the chaperonin GroEL, plays an essential role in assisting protein folding. The GroEL-GroES system forms a nano-cage that allows encapsulation of the non-native substrate proteins and provides a physical environment optimized to promote and accelerate protein folding. GroES binds to the apical surface of the GroEL ring, thereby capping the opening of the GroEL channel. The protein is Co-chaperonin GroES of Aromatoleum aromaticum (strain DSM 19018 / LMG 30748 / EbN1) (Azoarcus sp. (strain EbN1)).